The following is a 375-amino-acid chain: tRNA (guanine(26)-N(2))-dimethyltransferase (375 aa).

Residues 2-368 (KYITEGNTKL…AKLIDIVEFI (367 aa)) enclose the Trm1 methyltransferase domain. S-adenosyl-L-methionine contacts are provided by Arg-35, Arg-66, Asp-89, Asp-116, and Ala-117.

This sequence belongs to the class I-like SAM-binding methyltransferase superfamily. Trm1 family.

It carries out the reaction guanosine(26) in tRNA + 2 S-adenosyl-L-methionine = N(2)-dimethylguanosine(26) in tRNA + 2 S-adenosyl-L-homocysteine + 2 H(+). Dimethylates a single guanine residue at position 26 of a number of tRNAs using S-adenosyl-L-methionine as donor of the methyl groups. The polypeptide is tRNA (guanine(26)-N(2))-dimethyltransferase (Methanococcus aeolicus (strain ATCC BAA-1280 / DSM 17508 / OCM 812 / Nankai-3)).